Consider the following 518-residue polypeptide: Glutamate--cysteine ligase (518 aa).

It belongs to the glutamate--cysteine ligase type 1 family. Type 1 subfamily.

The catalysed reaction is L-cysteine + L-glutamate + ATP = gamma-L-glutamyl-L-cysteine + ADP + phosphate + H(+). It participates in sulfur metabolism; glutathione biosynthesis; glutathione from L-cysteine and L-glutamate: step 1/2. The protein is Glutamate--cysteine ligase of Salmonella typhi.